The following is a 289-amino-acid chain: Undecaprenyl-diphosphatase (289 aa).

8 helical membrane passes run 23-43 (LFLG…TAHL), 56-76 (GVAV…AYFW), 104-124 (SAIV…KLFW), 135-155 (IPAI…AENV), 165-185 (LSFW…IPGV), 210-230 (FLLG…QAFG), 235-255 (VDVF…WIAI), and 269-289 (IFIT…YLAF).

It belongs to the UppP family.

Its subcellular location is the cell inner membrane. The enzyme catalyses di-trans,octa-cis-undecaprenyl diphosphate + H2O = di-trans,octa-cis-undecaprenyl phosphate + phosphate + H(+). In terms of biological role, catalyzes the dephosphorylation of undecaprenyl diphosphate (UPP). Confers resistance to bacitracin. This Prochlorococcus marinus (strain SARG / CCMP1375 / SS120) protein is Undecaprenyl-diphosphatase.